The chain runs to 1424 residues: MPAPGALILLAAVSASGCLASPAHPDGFALSRAPLAPPYAVVLISCSGLLAFIFLLLTCLCCKRGDVRFKEFENPEGEDCSGEYTPPAEETSSSQSLPDVYILPLAEVSLPMPAPQPPHSDISTPLGLSRQHLSYLQEIGSGWFGKVILGEVFSDYSPAQVVVKELRASAGPLEQRKFISEAQPYRSLQHPNVLQCLGVCVETLPFLLIMEFCQLGDLKRYLRAQRPPEGMSPELPPRDLRTLQRMGLEIARGLAHLHSHNYVHSDLALRNCLLTSDLTVRIGDYGLAHSNYKEDYYLTPERLWVPLRWAAPELLGELHGSFVLVDQSRESNVWSLGVTLWELFEFGAQPYRHLSDEEVLAFVVRQQHVKLARPRLKLPYADYWYDILQSCWRPPAQRPSASDLQLQLTYLLSERPPRPPPPPPPPRDGPFPWPWPPSHSAPRPGTLSSQFPLLDGFPGADPDDVLTVTESSRGLNLECLWEKARRGAGRGGGAPPWQPASAPPAPHTNPSNPFYEALSTPSVLPVISARSPSVSSEYYIRLEEHGSPPEPLFPNDWDPLDPGVPGPQAPQTPSEVPQLVSETWASPLFPAPRPFPAQSSGSGGFLLSGWDPEGRGAGETLAGDPAEVLGEQGTAPWAEEEEEESSPGEDSSSLGGGPSRRGPLPCPLCSREGPCSCLPLERGDAVAGWGDHPALGCPHPPEDDSSLRAERGSLADLPLVPPTSAPLEFLDPLMGAAAPQYPGRGPPPAPPPPPPPPRASAEPAASPDPPSALASPGSGLSSPGPKPGDSGYETETPFSPEGAFPGGGAAKEEGVPRPRAPPEPPDPGAPRPPPDPGPLPLPGSQEKPTFVVQVSTEQLLMSLREDVTKNLLGDKGSTPGETGPRKAGRSPANREKGPGPNRDLTSLVSRKKVPSRSLPVNGVTVLENGKPGVPDMKEKVAENGLESPEKEERALVNGEPMSPEAGEKVLANGVLMSPKSEEKVAENGVLRLPRNTERPPEIGPRRVPGPWEKTPETGGLAPETLLDRAPAPCEAALPQNGLEMAPGQLGPAPKSGNPDPGTEWRVHESGGAPRAPGAGKLDLGSGGRALGGVGTAPAGGPASAVDAKAGWVDNSRPLPPPPQPLGAQQRRPEPVPLKARPEVAQEEEPGVPDNRLGGDMAPSVDEDPLKPERKGPEMPRLFLDLGPPQGNSEQIKAKLSRLSLALPPLTLTPFPGPGPRRPPWEGADAGAAGGEAGGAGAPGPAEEDGEDEDEDEEDEEAAGSRDPGRTREAPVPVVVSSADGDTVRPLRGLLKSPRAADEPEDSELERKRKMVSFHGDVTVYLFDQETPTNELSVQGTPEGDTEPSTPPAPPTPPHPTTPGDGFPNSDSGFGGSFEWAEDFPLLPPPGPPLCFSRFSVSPALETPGPPARAPDARPAGPVEN.

The signal sequence occupies residues methionine 1–alanine 20. Residues alanine 40–leucine 60 form a helical membrane-spanning segment. A disordered region spans residues asparagine 74–glutamine 95. In terms of domain architecture, Protein kinase spans leucine 133–leucine 411. ATP-binding positions include isoleucine 139–valine 147 and lysine 164. Phosphoserine is present on serine 232. The active-site Proton acceptor is aspartate 266. 2 disordered regions span residues serine 413 to valine 465 and arginine 486 to glutamate 516. A compositionally biased stretch (pro residues) spans arginine 418–histidine 439. Arginine 490 is modified (omega-N-methylarginine). Positions proline 496–histidine 507 are enriched in pro residues. Phosphoserine is present on residues serine 531 and serine 535. Disordered stretches follow at residues glutamate 544–cysteine 666, leucine 680–glutamate 964, methionine 976–threonine 1024, glycine 1041–lysine 1313, and leucine 1325–asparagine 1424. Polar residues predominate over residues glutamine 571–tryptophan 584. Residues alanine 638 to proline 647 show a composition bias toward acidic residues. Residues proline 700 to serine 713 show a composition bias toward basic and acidic residues. Pro residues predominate over residues arginine 744–arginine 758. Positions alanine 759–glycine 791 are enriched in low complexity. The span at proline 818–leucine 841 shows a compositional bias: pro residues. A compositionally biased stretch (basic and acidic residues) spans aspartate 935–alanine 954. A phosphoserine mark is found at serine 947, serine 962, and serine 977. Residues arginine 994–proline 1004 show a composition bias toward basic and acidic residues. The span at glycine 1084–glycine 1094 shows a compositional bias: gly residues. Positions threonine 1095 to valine 1105 are enriched in low complexity. The segment covering aspartate 1167 to glutamate 1177 has biased composition (basic and acidic residues). Over residues serine 1200–proline 1213 the composition is skewed to low complexity. Positions alanine 1231–alanine 1241 are enriched in gly residues. Residues alanine 1245–alanine 1261 show a composition bias toward acidic residues. The segment covering alanine 1262–glutamate 1272 has biased composition (basic and acidic residues). Residues glutamate 1329–glycine 1339 are compositionally biased toward polar residues. A compositionally biased stretch (pro residues) spans serine 1348 to threonine 1360.

The protein belongs to the protein kinase superfamily. Tyr protein kinase family. In terms of assembly, interacts with ESR1. Interacts with AP-2 complex subunit alpha. Mg(2+) serves as cofactor. In terms of processing, autophosphorylated. Expressed in brain. Predominantly expressed in cerebral cortex, thalamus, the cerebellum and hippocampal formation (at protein level).

It is found in the membrane. It localises to the cell projection. The protein resides in the axon. Its subcellular location is the dendrite. The protein localises to the golgi apparatus membrane. It carries out the reaction L-seryl-[protein] + ATP = O-phospho-L-seryl-[protein] + ADP + H(+). The enzyme catalyses L-threonyl-[protein] + ATP = O-phospho-L-threonyl-[protein] + ADP + H(+). Protein kinase which phosphorylates ESR1 (in vitro) and protects it against proteasomal degradation. May also regulate ESR1 levels indirectly via a PKC-AKT-FOXO3 pathway where it decreases the activity of PKC and the phosphorylation of AKT, thereby increasing binding of transcriptional activator FOXO3 to the ESR1 promoter and increasing ESR1 transcription. Involved in endocytic trafficking of N-methyl-D-aspartate receptors (NMDAR) in neurons. This is Serine/threonine-protein kinase LMTK3 (Lmtk3) from Mus musculus (Mouse).